The following is a 273-amino-acid chain: Pre-mRNA-splicing factor CWC23 (273 aa).

Positions D15–L87 constitute a J domain.

It belongs to the DnaJ family. As to quaternary structure, associated with the spliceosome.

The protein resides in the cytoplasm. Its subcellular location is the nucleus. Its function is as follows. Involved in pre-mRNA splicing. May be involved in endoplasmic reticulum-associated protein degradation (ERAD) and required for growth at low and high temperatures. In Eremothecium gossypii (strain ATCC 10895 / CBS 109.51 / FGSC 9923 / NRRL Y-1056) (Yeast), this protein is Pre-mRNA-splicing factor CWC23 (CWC23).